Reading from the N-terminus, the 424-residue chain is Exodeoxyribonuclease 7 large subunit (424 aa).

It belongs to the XseA family. Heterooligomer composed of large and small subunits.

The protein localises to the cytoplasm. It catalyses the reaction Exonucleolytic cleavage in either 5'- to 3'- or 3'- to 5'-direction to yield nucleoside 5'-phosphates.. In terms of biological role, bidirectionally degrades single-stranded DNA into large acid-insoluble oligonucleotides, which are then degraded further into small acid-soluble oligonucleotides. This Cyanothece sp. (strain PCC 7425 / ATCC 29141) protein is Exodeoxyribonuclease 7 large subunit.